We begin with the raw amino-acid sequence, 225 residues long: tRNA (guanine-N(1)-)-methyltransferase (225 aa).

Residues Gly-110 and 130–135 (VGDYVL) contribute to the S-adenosyl-L-methionine site.

The protein belongs to the RNA methyltransferase TrmD family. In terms of assembly, homodimer.

Its subcellular location is the cytoplasm. The catalysed reaction is guanosine(37) in tRNA + S-adenosyl-L-methionine = N(1)-methylguanosine(37) in tRNA + S-adenosyl-L-homocysteine + H(+). Functionally, specifically methylates guanosine-37 in various tRNAs. The sequence is that of tRNA (guanine-N(1)-)-methyltransferase from Neorickettsia sennetsu (strain ATCC VR-367 / Miyayama) (Ehrlichia sennetsu).